Consider the following 745-residue polypeptide: Targeting protein for Xklp2 (745 aa).

A Phosphothreonine modification is found at T72. The interval E84–I217 is disordered. 2 stretches are compositionally biased toward polar residues: residues Q91 to S101 and S110 to R119. 2 positions are modified to phosphoserine: S121 and S125. Basic and acidic residues-rich tracts occupy residues A126–H137, R182–A192, and A204–I217. K128 carries the N6-acetyllysine modification. The residue at position 294 (S294) is a Phosphoserine. The residue at position 307 (K307) is an N6-acetyllysine. Position 312 is a phosphoserine (S312). A Phosphothreonine modification is found at T340. S359 carries the phosphoserine modification. T369 carries the phosphothreonine modification. Position 375 is an N6-acetyllysine (K375). Residue K477 forms a Glycyl lysine isopeptide (Lys-Gly) (interchain with G-Cter in SUMO2) linkage. S486 is modified (phosphoserine). Residues K500 and K640 each participate in a glycyl lysine isopeptide (Lys-Gly) (interchain with G-Cter in SUMO2) cross-link. S737 bears the Phosphoserine mark. Residue K739 forms a Glycyl lysine isopeptide (Lys-Gly) (interchain with G-Cter in SUMO2) linkage.

This sequence belongs to the TPX2 family. Interacts with AURKA. Interacts with importin-alpha; leading to inactivate TPX2. Interacts with HNRNPU; this interaction recruits HNRNPU to spindle microtubules (MTs). Interacts with BCL2L10. Interacts with KIF11.

Its subcellular location is the nucleus. The protein localises to the cytoplasm. It localises to the cytoskeleton. The protein resides in the spindle. It is found in the spindle pole. Its function is as follows. Spindle assembly factor required for normal assembly of mitotic spindles. Required for normal assembly of microtubules during apoptosis. Required for chromatin and/or kinetochore dependent microtubule nucleation. Mediates AURKA localization to spindle microtubules. Activates AURKA by promoting its autophosphorylation at 'Thr-288' and protects this residue against dephosphorylation. TPX2 is inactivated upon binding to importin-alpha. At the onset of mitosis, GOLGA2 interacts with importin-alpha, liberating TPX2 from importin-alpha, allowing TPX2 to activate AURKA kinase and stimulate local microtubule nucleation. This chain is Targeting protein for Xklp2 (Tpx2), found in Mus musculus (Mouse).